The sequence spans 319 residues: Nucleotide-binding protein Rru_A3448 (319 aa).

The tract at residues 1–34 (MGRSASLLRLRDPAPLPTDIAPDPAEAPPSPAAD) is disordered. 42-49 (GMSGAGRT) is a binding site for ATP. 90–93 (DTRT) is a binding site for GTP.

It belongs to the RapZ-like family.

Displays ATPase and GTPase activities. This Rhodospirillum rubrum (strain ATCC 11170 / ATH 1.1.1 / DSM 467 / LMG 4362 / NCIMB 8255 / S1) protein is Nucleotide-binding protein Rru_A3448.